We begin with the raw amino-acid sequence, 144 residues long: Peptide methionine sulfoxide reductase MsrB (144 aa).

Positions 5-127 constitute a MsrB domain; sequence KEEKIKSLNR…NSAALRFIPK (123 aa). The active-site Nucleophile is the Cys-116.

Belongs to the MsrB Met sulfoxide reductase family.

It catalyses the reaction L-methionyl-[protein] + [thioredoxin]-disulfide + H2O = L-methionyl-(R)-S-oxide-[protein] + [thioredoxin]-dithiol. This Bacillus velezensis (strain DSM 23117 / BGSC 10A6 / LMG 26770 / FZB42) (Bacillus amyloliquefaciens subsp. plantarum) protein is Peptide methionine sulfoxide reductase MsrB.